A 331-amino-acid polypeptide reads, in one-letter code: Olfactory receptor 6S1 (331 aa).

The Extracellular portion of the chain corresponds to 1–29 (MSPDGNHSSDPTEFVLAGLPNLNSARVEL). N6 is a glycosylation site (N-linked (GlcNAc...) asparagine). Residues 30–50 (FSVFLLVYLLNLTGNVLIVGV) form a helical membrane-spanning segment. The Cytoplasmic portion of the chain corresponds to 51–59 (VRADTRLQT). The chain crosses the membrane as a helical span at residues 60–80 (PMYFFLGNLSCLEILLTSVII). The Extracellular portion of the chain corresponds to 81–99 (PKMLSNFLSRQHTISFAAC). Cysteines 99 and 182 form a disulfide. A helical membrane pass occupies residues 100–120 (ITQFYFYFFLGASEFLLLAVM). Over 121–147 (SADRYLAICHPLRYPLLMSGAVCFRVA) the chain is Cytoplasmic. Residues 148–168 (LACWVGGLVPVLGPTVAVALL) form a helical membrane-spanning segment. Over 169 to 207 (PFCKQGAVVQHFFCDSGPLLRLACTNTKKLEETDFVLAS) the chain is Extracellular. The chain crosses the membrane as a helical span at residues 208 to 228 (LVIVSSLLITAVSYGLIVLAV). The Cytoplasmic portion of the chain corresponds to 229 to 242 (LSIPSASGRQKAFS). The helical transmembrane segment at 243 to 263 (TCTSHLIVVTLFYGSAIFLYV) threads the bilayer. The Extracellular segment spans residues 264–274 (RPSQSGSVDTN). The chain crosses the membrane as a helical span at residues 275–295 (WAVTVITTFVTPLLNPFIYAL). The Cytoplasmic portion of the chain corresponds to 296–331 (RNEQVKEALKDMFRKVVAGVLGNLLLDKCLSEKAVK).

Belongs to the G-protein coupled receptor 1 family.

It localises to the cell membrane. In terms of biological role, odorant receptor. This Homo sapiens (Human) protein is Olfactory receptor 6S1 (OR6S1).